A 905-amino-acid chain; its full sequence is Sun domain-containing protein 1 (905 aa).

3 disordered regions span residues 1–21 (MSGDYKPNYQSSPSRKRLPLQ), 41–166 (NNTV…ILKQ), and 207–242 (QQQQQQQRNNNNNSNSSNNNNTSTTIKRNNQQIDNN). The Nuclear segment spans residues 1 to 290 (MSGDYKPNYQ…NNNNKVNFKQ (290 aa)). 2 stretches are compositionally biased toward low complexity: residues 41–67 (NNTVNNNSSNNSNNHLLHNSNPNSSYL) and 75–101 (SNQINIRNNSNSNSNTNNITSKKASSS). The segment covering 107–116 (KVDHNSHNNN) has biased composition (basic and acidic residues). The segment covering 117–126 (DDDDIEDDVD) has biased composition (acidic residues). Residues 129–146 (YSTNNASSNILHNRFSNS) show a composition bias toward polar residues. Positions 170–221 (LYNHLNNQIQQQQQQQQQQQQQQQQQQQQQQQQQQQQQQQQQQQRNNNNNSN) form a coiled coil. A compositionally biased stretch (low complexity) spans 207–227 (QQQQQQQRNNNNNSNSSNNNN). The chain crosses the membrane as a helical span at residues 291-311 (AIWIFIFSVLFIGCLLGLFST). Residues 312–905 (NFYGIHIYFP…IEKQQQSDEL (594 aa)) are Perinuclear space-facing. 2 coiled-coil regions span residues 359 to 456 (KKNE…QLIQ) and 504 to 609 (REFN…TQQF). Residues 662 to 860 (GASIEYNALH…YRFRVHGYQI (199 aa)) form the SUN domain. A coiled-coil region spans residues 864–901 (EQEQIQIIQEEQSFKQEEINQQQIEQIEQIEQIEKQQQ).

In terms of assembly, homodimer and homooligomer.

It is found in the nucleus membrane. In terms of biological role, may have an important role in defining the spacing of the nuclear envelope lumen. Essential for centrosome attachment to the nucleus, maintenance of correct ploidy, proper mitosis, association of the centromere cluster with the centrosome and the maintenance of genome stability. Requires direct chromatin binding for inner nuclear membrane targeting. This chain is Sun domain-containing protein 1 (sun1), found in Dictyostelium discoideum (Social amoeba).